A 163-amino-acid chain; its full sequence is UPF0763 protein JJD26997_0796 (163 aa).

Belongs to the UPF0763 family.

In Campylobacter jejuni subsp. doylei (strain ATCC BAA-1458 / RM4099 / 269.97), this protein is UPF0763 protein JJD26997_0796.